Reading from the N-terminus, the 1823-residue chain is THO complex subunit 2 (1823 aa).

The stretch at 935-1003 (NRYESEISKQ…RRRLSREKDT (69 aa)) forms a coiled coil. The short motif at 964 to 969 (KRKKEK) is the Nuclear localization signal element. 2 disordered regions span residues 1244–1382 (LVGV…KDLN) and 1394–1823 (ALSS…GSRE). Basic and acidic residues-rich tracts occupy residues 1272-1283 (QMLKTKPLDGRT), 1312-1330 (KSME…DENP), and 1356-1367 (AKQDFGKDDGKS). A compositionally biased stretch (polar residues) spans 1394 to 1409 (ALSSTAANGSIATGSS). Residues 1432 to 1596 (PRHEIVTSVR…EKSHPDDHFH (165 aa)) show a composition bias toward basic and acidic residues. A compositionally biased stretch (pro residues) spans 1600–1610 (LPPPPPLPPNI). Basic and acidic residues-rich tracts occupy residues 1616–1625 (AAKEDLERRA), 1636–1648 (PRHE…RSEE), 1655–1706 (DDAK…FEAS), and 1768–1785 (LGKE…DPIA). Residues S1646 and S1696 each carry the phosphoserine modification. Polar residues predominate over residues 1802–1816 (MTVNGKTTRGEQSGS).

The protein belongs to the THOC2 family. As to quaternary structure, component of the THO complex, which is composed of THO1, THO2, THO3, THO5, THO6 and THO7.

The protein localises to the nucleus. In terms of biological role, acts as a component of the THO subcomplex of the TREX complex which is thought to couple mRNA transcription, processing and nuclear export. This chain is THO complex subunit 2 (THO2), found in Arabidopsis thaliana (Mouse-ear cress).